A 607-amino-acid polypeptide reads, in one-letter code: Arginine decarboxylase (607 aa).

Lysine 104 bears the N6-(pyridoxal phosphate)lysine mark. Substrate is bound at residue 290–300 (LDCGGGLGVDY).

Belongs to the Orn/Lys/Arg decarboxylase class-II family. SpeA subfamily. Pyridoxal 5'-phosphate serves as cofactor. It depends on Mg(2+) as a cofactor.

The catalysed reaction is L-arginine + H(+) = agmatine + CO2. It participates in amine and polyamine biosynthesis; agmatine biosynthesis; agmatine from L-arginine: step 1/1. This is Arginine decarboxylase (SPE1) from Avena sativa (Oat).